We begin with the raw amino-acid sequence, 176 residues long: NAD(P)H-quinone oxidoreductase subunit 6, chloroplastic (176 aa).

5 consecutive transmembrane segments (helical) span residues 10–30 (FLLV…VLFP), 32–52 (PIFS…LYIL), 61–81 (AQLL…VMFM), 95–115 (VGDG…ISTI), and 152–172 (FFLP…GAIS).

It belongs to the complex I subunit 6 family. As to quaternary structure, NDH is composed of at least 16 different subunits, 5 of which are encoded in the nucleus.

The protein localises to the plastid. It is found in the chloroplast thylakoid membrane. The catalysed reaction is a plastoquinone + NADH + (n+1) H(+)(in) = a plastoquinol + NAD(+) + n H(+)(out). It carries out the reaction a plastoquinone + NADPH + (n+1) H(+)(in) = a plastoquinol + NADP(+) + n H(+)(out). NDH shuttles electrons from NAD(P)H:plastoquinone, via FMN and iron-sulfur (Fe-S) centers, to quinones in the photosynthetic chain and possibly in a chloroplast respiratory chain. The immediate electron acceptor for the enzyme in this species is believed to be plastoquinone. Couples the redox reaction to proton translocation, and thus conserves the redox energy in a proton gradient. This Aethionema cordifolium (Lebanon stonecress) protein is NAD(P)H-quinone oxidoreductase subunit 6, chloroplastic (ndhG).